The primary structure comprises 511 residues: Putative thymidine phosphorylase (511 aa).

It belongs to the thymidine/pyrimidine-nucleoside phosphorylase family. Type 2 subfamily.

The catalysed reaction is thymidine + phosphate = 2-deoxy-alpha-D-ribose 1-phosphate + thymine. In Bradyrhizobium sp. (strain BTAi1 / ATCC BAA-1182), this protein is Putative thymidine phosphorylase.